Consider the following 386-residue polypeptide: Cell division protein FtsZ (386 aa).

GTP contacts are provided by residues 20 to 24 (GGGGN), 107 to 109 (GTG), Glu-138, Arg-142, and Asn-186. The tract at residues 350-377 (LNQEQKTAAKAVNEQNAQGSKEPDYLDI) is disordered.

The protein belongs to the FtsZ family. In terms of assembly, homodimer. Polymerizes to form a dynamic ring structure in a strictly GTP-dependent manner. Interacts directly with several other division proteins.

The protein localises to the cytoplasm. In terms of biological role, essential cell division protein that forms a contractile ring structure (Z ring) at the future cell division site. The regulation of the ring assembly controls the timing and the location of cell division. One of the functions of the FtsZ ring is to recruit other cell division proteins to the septum to produce a new cell wall between the dividing cells. Binds GTP and shows GTPase activity. This Sodalis glossinidius protein is Cell division protein FtsZ.